The primary structure comprises 316 residues: Small ribosomal subunit protein RACK1 (316 aa).

WD repeat units lie at residues 4-46, 52-93, 94-135, 137-180, 181-221, 222-263, and 264-312; these read QMTL…WRLT, YGVP…WDLS, TGQT…WNTL, VCKY…WNLT, NCKL…LWDL, NEGK…WDLE, and GKVV…WQVS.

This sequence belongs to the WD repeat G protein beta family. Ribosomal protein RACK1 subfamily.

This Biomphalaria glabrata (Bloodfluke planorb) protein is Small ribosomal subunit protein RACK1.